A 467-amino-acid polypeptide reads, in one-letter code: Ribulose bisphosphate carboxylase large chain (467 aa).

Substrate-binding residues include Xaa-106 and Thr-156. The Proton acceptor role is filled by Lys-158. Substrate is bound at residue Lys-160. Positions 184, 186, and 187 each coordinate Mg(2+). The residue at position 184 (Lys-184) is an N6-carboxylysine. His-276 acts as the Proton acceptor in catalysis. Substrate is bound by residues Arg-277, His-309, and Ser-361.

This sequence belongs to the RuBisCO large chain family. Type I subfamily. In terms of assembly, heterohexadecamer of 8 large chains and 8 small chains. It depends on Mg(2+) as a cofactor.

The protein resides in the plastid. It is found in the chloroplast. It catalyses the reaction 2 (2R)-3-phosphoglycerate + 2 H(+) = D-ribulose 1,5-bisphosphate + CO2 + H2O. It carries out the reaction D-ribulose 1,5-bisphosphate + O2 = 2-phosphoglycolate + (2R)-3-phosphoglycerate + 2 H(+). Its function is as follows. RuBisCO catalyzes two reactions: the carboxylation of D-ribulose 1,5-bisphosphate, the primary event in carbon dioxide fixation, as well as the oxidative fragmentation of the pentose substrate in the photorespiration process. Both reactions occur simultaneously and in competition at the same active site. This Chondrus crispus (Carrageen Irish moss) protein is Ribulose bisphosphate carboxylase large chain (rbcL).